The sequence spans 279 residues: Tryptophan synthase alpha chain (279 aa).

Catalysis depends on proton acceptor residues Glu-50 and Asp-61.

It belongs to the TrpA family. As to quaternary structure, tetramer of two alpha and two beta chains.

The enzyme catalyses (1S,2R)-1-C-(indol-3-yl)glycerol 3-phosphate + L-serine = D-glyceraldehyde 3-phosphate + L-tryptophan + H2O. It participates in amino-acid biosynthesis; L-tryptophan biosynthesis; L-tryptophan from chorismate: step 5/5. The alpha subunit is responsible for the aldol cleavage of indoleglycerol phosphate to indole and glyceraldehyde 3-phosphate. In Methylobacterium radiotolerans (strain ATCC 27329 / DSM 1819 / JCM 2831 / NBRC 15690 / NCIMB 10815 / 0-1), this protein is Tryptophan synthase alpha chain.